The primary structure comprises 255 residues: Type III pantothenate kinase (255 aa).

An ATP-binding site is contributed by 6–13 (DIGNTNTV). Substrate is bound by residues Tyr-100 and 107 to 110 (GADR). Asp-109 serves as the catalytic Proton acceptor. Asp-129 contacts K(+). Thr-132 lines the ATP pocket. A substrate-binding site is contributed by Thr-185.

It belongs to the type III pantothenate kinase family. As to quaternary structure, homodimer. It depends on NH4(+) as a cofactor. K(+) serves as cofactor.

The protein resides in the cytoplasm. It carries out the reaction (R)-pantothenate + ATP = (R)-4'-phosphopantothenate + ADP + H(+). The protein operates within cofactor biosynthesis; coenzyme A biosynthesis; CoA from (R)-pantothenate: step 1/5. Functionally, catalyzes the phosphorylation of pantothenate (Pan), the first step in CoA biosynthesis. In Desulfosudis oleivorans (strain DSM 6200 / JCM 39069 / Hxd3) (Desulfococcus oleovorans), this protein is Type III pantothenate kinase.